A 345-amino-acid chain; its full sequence is MFSSLYPLARASLFKMDAEDAHHLTLRALGAAGRTGLACALSARVPDAPRTVMGLTFRNPVGLAAGLDKDGAAIDGLAALGFGFIEVGTVTPRPQPGNPRPRMFRLPQAEALINRMGFNNHGVDQFVKNVQAARYRGILGLNIGKNADTPIERAAEDYLYCLERVYPFASYVTINISSPNTKNLRQLQGAGELDALLAALKDKQQRLADLHGKLVPLALKIAPDLDDEQVKEIGDTLLRHKIEAVIATNTTLSRAAVQGLPHADEAGGLSGRPVFDASNEVIRKLHAEVGNDVPIIGVGGIFSGEDARAKLAAGAALVQLYTGFIYRGPALVSECVKAIARERTA.

FMN contacts are provided by residues 65 to 69 and T89; that span reads AGLDK. K69 is a substrate binding site. Residue 114–118 coordinates substrate; sequence NRMGF. The FMN site is built by N142 and N175. Substrate is bound at residue N175. S178 serves as the catalytic Nucleophile. N180 provides a ligand contact to substrate. FMN contacts are provided by K220 and T248. A substrate-binding site is contributed by 249 to 250; that stretch reads NT. FMN-binding positions include G271, G300, and 321-322; that span reads YT.

Belongs to the dihydroorotate dehydrogenase family. Type 2 subfamily. Monomer. It depends on FMN as a cofactor.

Its subcellular location is the cell membrane. It carries out the reaction (S)-dihydroorotate + a quinone = orotate + a quinol. It functions in the pathway pyrimidine metabolism; UMP biosynthesis via de novo pathway; orotate from (S)-dihydroorotate (quinone route): step 1/1. Its function is as follows. Catalyzes the conversion of dihydroorotate to orotate with quinone as electron acceptor. The sequence is that of Dihydroorotate dehydrogenase (quinone) from Burkholderia cenocepacia (strain ATCC BAA-245 / DSM 16553 / LMG 16656 / NCTC 13227 / J2315 / CF5610) (Burkholderia cepacia (strain J2315)).